Consider the following 492-residue polypeptide: Peptidyl-prolyl cis-trans isomerase-like 4 (492 aa).

A PPIase cyclophilin-type domain is found at 1–161 (MAVLLETTLG…QDIRINHTVI (161 aa)). The interval 167 to 188 (DDPPDLLIPDRSPEPTREQLDS) is disordered. A compositionally biased stretch (basic and acidic residues) spans 177 to 187 (RSPEPTREQLD). The residue at position 178 (serine 178) is a Phosphoserine. Threonine 182 carries the phosphothreonine modification. Glycyl lysine isopeptide (Lys-Gly) (interchain with G-Cter in SUMO2) cross-links involve residues lysine 201, lysine 212, and lysine 218. The 79-residue stretch at 240 to 318 (NVLFVCKLNP…RRIHVDFSQS (79 aa)) folds into the RRM domain. Residues lysine 321 and lysine 362 each participate in a glycyl lysine isopeptide (Lys-Gly) (interchain with G-Cter in SUMO2) cross-link. 2 disordered regions span residues 368-406 (DEQA…PIKN) and 423-492 (EESC…SKYR). Basic residues predominate over residues 377 to 390 (SHSHTSKKHKKKTH). Serine 393 bears the Phosphoserine mark. Lysine 405 is covalently cross-linked (Glycyl lysine isopeptide (Lys-Gly) (interchain with G-Cter in SUMO2)). Over residues 426–452 (CWEKQKSEKRDRTQNRSRSRSRERDGH) the composition is skewed to basic and acidic residues. A Glycyl lysine isopeptide (Lys-Gly) (interchain with G-Cter in SUMO2) cross-link involves residue lysine 460. The residue at position 471 (serine 471) is a Phosphoserine. Residues 482 to 492 (KSKDKEKSKYR) are compositionally biased toward basic and acidic residues.

It belongs to the cyclophilin-type PPIase family. PPIL4 subfamily. In terms of tissue distribution, abundantly expressed in kidney but has a ubiquitously low expression pattern in other adult tissues.

It is found in the nucleus. It catalyses the reaction [protein]-peptidylproline (omega=180) = [protein]-peptidylproline (omega=0). Its function is as follows. PPIases accelerate the folding of proteins. It catalyzes the cis-trans isomerization of proline imidic peptide bonds in oligopeptides. The polypeptide is Peptidyl-prolyl cis-trans isomerase-like 4 (PPIL4) (Homo sapiens (Human)).